Consider the following 660-residue polypeptide: Peroxisomal acyl-coenzyme A oxidase 1 (660 aa).

At serine 26 the chain carries Phosphoserine. At lysine 65 the chain carries N6-acetyllysine. N6-succinyllysine occurs at positions 89 and 90. FAD contacts are provided by threonine 139 and glycine 178. N6-acetyllysine is present on lysine 216. An N6-succinyllysine modification is found at lysine 241. Lysine 255, lysine 267, and lysine 272 each carry N6-acetyllysine. Lysine 349 carries the N6-succinyllysine modification. Glutamate 421 acts as the Proton acceptor in catalysis. 2 positions are modified to N6-acetyllysine; alternate: lysine 437 and lysine 446. N6-succinyllysine; alternate is present on residues lysine 437 and lysine 446. Residue lysine 500 is modified to N6-acetyllysine. Lysine 512 is modified (N6-acetyllysine; alternate). Lysine 512 carries the post-translational modification N6-succinyllysine; alternate. Lysine 542 carries the N6-succinyllysine modification. Lysine 637 carries the N6-acetyllysine; alternate modification. Lysine 637 carries the N6-succinyllysine; alternate modification. An N6-succinyllysine modification is found at lysine 643. Position 649 is a phosphoserine (serine 649). Position 651 is an N6-acetyllysine (lysine 651). N6-succinyllysine is present on lysine 654. The short motif at 658 to 660 (SKL) is the Microbody targeting signal element.

It belongs to the acyl-CoA oxidase family. In terms of assembly, homodimer. Interacts with LONP2. FAD serves as cofactor.

Its subcellular location is the peroxisome. It catalyses the reaction a 2,3-saturated acyl-CoA + O2 = a (2E)-enoyl-CoA + H2O2. It carries out the reaction hexadecanoyl-CoA + O2 = (2E)-hexadecenoyl-CoA + H2O2. The catalysed reaction is dodecanoyl-CoA + O2 = (2E)-dodecenoyl-CoA + H2O2. The enzyme catalyses octanoyl-CoA + O2 = (2E)-octenoyl-CoA + H2O2. It catalyses the reaction decanoyl-CoA + O2 = (2E)-decenoyl-CoA + H2O2. It carries out the reaction tetradecanoyl-CoA + O2 = (2E)-tetradecenoyl-CoA + H2O2. The catalysed reaction is hexadecanedioyl-CoA + O2 = (2E)-hexadecenedioyl-CoA + H2O2. The enzyme catalyses tetracosanoyl-CoA + O2 = (2E)-tetracosenoyl-CoA + H2O2. It catalyses the reaction glutaryl-CoA + O2 = (2E)-glutaconyl-CoA + H2O2. It carries out the reaction hexanoyl-CoA + O2 = (2E)-hexenoyl-CoA + H2O2. The catalysed reaction is octadecanoyl-CoA + O2 = (2E)-octadecenoyl-CoA + H2O2. The enzyme catalyses (5Z,8Z,11Z,14Z,17Z)-eicosapentaenoyl-CoA + O2 = (2E,5Z,8Z,11Z,14Z,17Z)-icosahexaenoyl-CoA + H2O2. It catalyses the reaction (6Z,9Z,12Z,15Z,18Z,21Z)-tetracosahexaenoyl-CoA + O2 = (2E,6Z,9Z,12Z,15Z,18Z,21Z)-tetracosaheptaenoyl-CoA + H2O2. It participates in lipid metabolism; peroxisomal fatty acid beta-oxidation. Its function is as follows. Involved in the initial and rate-limiting step of peroxisomal beta-oxidation of straight-chain saturated and unsaturated very-long-chain fatty acids. Catalyzes the desaturation of fatty acyl-CoAs such as palmitoyl-CoA (hexadecanoyl-CoA) to 2-trans-enoyl-CoAs ((2E)-enoyl-CoAs) such as (2E)-hexadecenoyl-CoA, and donates electrons directly to molecular oxygen (O(2)), thereby producing hydrogen peroxide (H(2)O(2)). This chain is Peroxisomal acyl-coenzyme A oxidase 1, found in Bos taurus (Bovine).